A 974-amino-acid chain; its full sequence is MAQLYYKKVNYSPYRDRIPLQIVRAETELSAEEKAFLNAVEKGDYATVKQALQEAEIYYNVNINCMDPLGRSALLIAIENENLEIMELLLNHSVYVGDALLYAIRKEVVGAVELLLSYRKPSGEKQVPTLMMDTQFSEFTPDITPIMLAAHTNNYEIIKLLVQKRVTIPRPHQIRCNCVECVSSSEVDSLRHSRSRLNIYKALASPSLIALSSEDPILTAFRLGWELKELSKVENEFKAEYEELSQQCKLFAKDLLDQARSSRELEIILNHRDDHSEELDPQKYHDLAKLKVAIKYHQKEFVAQPNCQQLLATLWYDGFPGWRRKHWVVKLLTCMTIGFLFPMLSIAYLISPRSNLGLFIKKPFIKFICHTASYLTFLFMLLLASQHIVRTDLHVQGPPPTVVEWMILPWVLGFIWGEIKEMWDGGFTEYIHDWWNLMDFAMNSLYLATISLKIVAYVKYNGSRPREEWEMWHPTLIAEALFAISNILSSLRLISLFTANSHLGPLQISLGRMLLDILKFLFIYCLVLLAFANGLNQLYFYYETRAIDEPNNCKGIRCEKQNNAFSTLFETLQSLFWSVFGLLNLYVTNVKARHEFTEFVGATMFGTYNVISLVVLLNMLIAMMNNSYQLIADHADIEWKFARTKLWMSYFDEGGTLPPPFNIIPSPKSFLYLGNWFNNTFCPKRDPDGRRRRHNLRSFTERHADSLIQNQHYQEVIRNLVKRYVAAMIRNSKTNEGLTEENFKELKQDISSFRYEVLDLLGNRKQPRRSLSTSSTELSQRDDTNDGSGGARAKSKSVSFNLGCKKKACHGPPLIRTMPRASGAQGKSKAESSSKRSFMGPSLKKLGLLFSKFNGHMSEPSSEPMYTISDGIVQQHYMWQDIRYSQMEKGKAEACSQSEINLSEVELGEVRGAAQSSECPLTCSSSLHCASSICSSNSKLLDSSEDVFETWGEACDLLMHKWGDGQEEQVTTRL.

Topologically, residues 1-325 (MAQLYYKKVN…YDGFPGWRRK (325 aa)) are cytoplasmic. ANK repeat units follow at residues 30 to 60 (SAEE…IYYN), 69 to 97 (LGRS…VYVG), 98 to 124 (DALL…PSGE), and 141 to 170 (PDIT…TIPR). Residues histidine 172, cysteine 176, cysteine 178, and cysteine 181 each coordinate Zn(2+). An intramembrane region (discontinuously helical) is located at residues 326-360 (HWVVKLLTCMTIGFLFPMLSIAYLISPRSNLGLFI). Residues 361 to 363 (KKP) lie on the Cytoplasmic side of the membrane. The chain crosses the membrane as a helical span at residues 364–384 (FIKFICHTASYLTFLFMLLLA). The Extracellular portion of the chain corresponds to 385–404 (SQHIVRTDLHVQGPPPTVVE). A helical membrane pass occupies residues 405 to 419 (WMILPWVLGFIWGEI). Positions 418, 421, 436, and 439 each coordinate Ca(2+). The Cytoplasmic segment spans residues 420 to 433 (KEMWDGGFTEYIHD). Residues 434 to 454 (WWNLMDFAMNSLYLATISLKI) form a helical membrane-spanning segment. The Extracellular portion of the chain corresponds to 455-476 (VAYVKYNGSRPREEWEMWHPTL). Asparagine 461 carries N-linked (GlcNAc...) asparagine glycosylation. A helical membrane pass occupies residues 477 to 497 (IAEALFAISNILSSLRLISLF). Residues 498–512 (TANSHLGPLQISLGR) lie on the Cytoplasmic side of the membrane. Residues 513–535 (MLLDILKFLFIYCLVLLAFANGL) traverse the membrane as a helical segment. Residues 536–603 (NQLYFYYETR…HEFTEFVGAT (68 aa)) are Extracellular-facing. A disulfide bridge connects residues cysteine 553 and cysteine 558. The helical transmembrane segment at 604 to 624 (MFGTYNVISLVVLLNMLIAMM) threads the bilayer. The Cytoplasmic segment spans residues 625 to 974 (NNSYQLIADH…GQEEQVTTRL (350 aa)). Disordered stretches follow at residues 766 to 795 (QPRR…RAKS) and 811 to 838 (GPPL…KRSF). The span at 769 to 778 (RSLSTSSTEL) shows a compositional bias: low complexity. The interval 972–974 (TRL) is essential for binding to NHERF1 PDZ domain.

The protein belongs to the transient receptor (TC 1.A.4) family. STrpC subfamily. TRPC5 sub-subfamily. As to quaternary structure, homotetramer. Heterotetramer with TRPC1 and/or TRPC4. Each subunit in the homomeric ion channel (via ANK repeats) interacts with one copy of GTP-bound GNAI3; the interaction is direct and activates the ion channel. Interacts with TRPC4AP. Interacts with NHERF1. Interacts with MX1 and RNF24. Interacts (via C-terminus) with CABP1. Interacts with SESTD1 (via the spectrin 1 repeat). Interacts with PLSCR1. Interacts with PKD2L2. In terms of tissue distribution, expressed in brain.

Its subcellular location is the cell membrane. It carries out the reaction Ca(2+)(in) = Ca(2+)(out). With respect to regulation, activated by G-protein coupled receptors via direct interaction with GTP-bound GNAI3, which increases the channel sensitivity to phosphatidylinositol bisphosphate. May be activated by intracellular calcium store depletion. Calcium channel activity is enhanced by MYLK, that promotes its subcellular localization at the plasma membrane. Its function is as follows. Forms a receptor-activated non-selective calcium permeant cation channel. Mediates calcium-dependent phosphatidylserine externalization and apoptosis in neurons via its association with PLSCR1. Acts on distinct neuronal populations in the hypothalamus to regulate innate behaviors including feeding, anxiety (flight/fight/fear), socialization and maternal care. The polypeptide is Short transient receptor potential channel 5 (TRPC5) (Oryctolagus cuniculus (Rabbit)).